A 267-amino-acid chain; its full sequence is Probable ribosomal RNA small subunit methyltransferase A (267 aa).

L12, G37, E58, D83, and N100 together coordinate S-adenosyl-L-methionine.

Belongs to the class I-like SAM-binding methyltransferase superfamily. rRNA adenine N(6)-methyltransferase family. RsmA subfamily.

It is found in the cytoplasm. Functionally, specifically dimethylates two adjacent adenosines in the loop of a conserved hairpin near the 3'-end of 16S rRNA in the 30S particle. May play a critical role in biogenesis of 30S subunits. The protein is Probable ribosomal RNA small subunit methyltransferase A of Methanococcus vannielii (strain ATCC 35089 / DSM 1224 / JCM 13029 / OCM 148 / SB).